The chain runs to 345 residues: UDP-N-acetylenolpyruvoylglucosamine reductase (345 aa).

Residues 27-197 form the FAD-binding PCMH-type domain; it reads FDASAELAYE…TKVVFKLPKQ (171 aa). Residue R174 is part of the active site. Catalysis depends on S245, which acts as the Proton donor. E341 is an active-site residue.

It belongs to the MurB family. The cofactor is FAD.

It is found in the cytoplasm. The enzyme catalyses UDP-N-acetyl-alpha-D-muramate + NADP(+) = UDP-N-acetyl-3-O-(1-carboxyvinyl)-alpha-D-glucosamine + NADPH + H(+). The protein operates within cell wall biogenesis; peptidoglycan biosynthesis. Cell wall formation. This Polynucleobacter asymbioticus (strain DSM 18221 / CIP 109841 / QLW-P1DMWA-1) (Polynucleobacter necessarius subsp. asymbioticus) protein is UDP-N-acetylenolpyruvoylglucosamine reductase.